Here is a 384-residue protein sequence, read N- to C-terminus: Probable beta-1,3-galactosyltransferase 1 (384 aa).

Residues 21–43 form a helical; Signal-anchor for type II membrane protein membrane-spanning segment; it reads SVFFMCLASFCLGMFFTNRMWNI. Residues Asn-73 and Asn-105 are each glycosylated (N-linked (GlcNAc...) asparagine).

Belongs to the glycosyltransferase 31 family. Requires Mn(2+) as cofactor.

The protein localises to the golgi apparatus membrane. It participates in protein modification; protein glycosylation. Its function is as follows. Beta-1,3-galactosyltransferase that transfers galactose from UDP-galactose to substrates with a terminal glycosyl residue. This Arabidopsis thaliana (Mouse-ear cress) protein is Probable beta-1,3-galactosyltransferase 1 (B3GALT1).